Consider the following 195-residue polypeptide: MKLMALQLLLWHIALWMVPEAAPLSPASSLPQSFLLKCLEQVRKIQADGAELQERLCATHKLCHPQELVLLGHSLGLPQASLSSCSSQALQLTGCLNQLHGGLVLYQGLLQALAGISPELAPALDILQLDVTDLATNIWLQMEDLRMAPASLPTQGTVPTFTSAFQRRAGGVLVVSQLQSFLELAYRVLRYLAEP.

A signal peptide spans 1-21; the sequence is MKLMALQLLLWHIALWMVPEA. Disulfide bonds link Cys-57/Cys-63 and Cys-85/Cys-95. O-linked (GalNAc...) threonine glycosylation occurs at Thr-154.

It belongs to the IL-6 superfamily. In terms of assembly, monomer. Post-translationally, O-glycosylated.

Its subcellular location is the secreted. Functionally, granulocyte/macrophage colony-stimulating factors are cytokines that act in hematopoiesis by controlling the production, differentiation, and function of 2 related white cell populations of the blood, the granulocytes and the monocytes-macrophages. This CSF induces granulocytes. In Sus scrofa (Pig), this protein is Granulocyte colony-stimulating factor (CSF3).